Reading from the N-terminus, the 206-residue chain is Imidazoleglycerol-phosphate dehydratase (206 aa).

The disordered stretch occupies residues 1–21 (MTTPSTAPTPAPRKAEVSRNT).

This sequence belongs to the imidazoleglycerol-phosphate dehydratase family.

The protein localises to the cytoplasm. The catalysed reaction is D-erythro-1-(imidazol-4-yl)glycerol 3-phosphate = 3-(imidazol-4-yl)-2-oxopropyl phosphate + H2O. The protein operates within amino-acid biosynthesis; L-histidine biosynthesis; L-histidine from 5-phospho-alpha-D-ribose 1-diphosphate: step 6/9. This Polaromonas sp. (strain JS666 / ATCC BAA-500) protein is Imidazoleglycerol-phosphate dehydratase.